A 965-amino-acid polypeptide reads, in one-letter code: MAKGFYISKALGILAILLGVAAVATIIALSVVYAQEKNKNAERGTAAPTSPTGPTTTSATTLDQSKPWNRYRLPTTLLPDSYRVTLRPYLTPNNNGLYIFTGSSTVRFTCKEPTDVIIIHSKKLNYTQHSGHLAALKGVGDTQAPEIDRTELVLLTEYLVVHLKSSLEAGKTYEMETTFQGELADDLAGFYRSEYMDGNVKKVLATTQMQSTDARKSFPCFDEPAMKATFNITLIHPKDLTALSNMPPKGPSVPFDGDSNWSVTEFETTPVMSTYLLAYIVSEFTSVESVAPNDVQIRIWARPKATADNHGLYALNVTGPILNFFANHYNTAYPLPKSDQIALPDFNAGAMENWGLVTYRENALLYDPQSSSSSNKERVVTVIAHELAHQWFGNLVTLAWWNDLWLNEGFASYVEYLGADYAEPTWNLKDLMVPNDVYSVMAVDALVTSHPLTTPANEVNTPAQISEMFDTISYSKGASVIRMLSNFLTEDLFKKGLASYLQTFAYQNTTYLNLWEHLQMAVENQLSIRLPDTVSAIMDRWTLQMGFPVITVDTNTGTISQKHFLLDPNSTVTRPSQFNYLWIVPISSIRNGQPQEHYWLRGEERNQNELFKAAADDWVLLNINVTGYYQVNYDENNWKKIQNQLMSRRENIPVINRAQVIYDSFNLASAHMVPVTLALNNTLFLKNEMEYMPWQAAVSSLNYFKLMFDRTEVYGPMQNYLKNQVEPIFLYFENLTKNWTEIPENLMDQYSEINAISTACSNGLPKCEELAKTLFNQWMNNPNVNPIDPNLRSTIYCNAIAQGGQEEWDFAWNQLQQAELVNEADKLRSALACTNHVWLLNRYLSYTLNPDLIRKQDATSTITSIASNVIGQSLAWDFIRSNWKKLFEDYGGGSFSFSNLIQGVTRRFSTEFELQQLEEFKENNMDVGFGSGTRALEQALEKTKANINWVKENKEVVLNWFKDHS.

Topologically, residues Met1–Ser8 are cytoplasmic. A helical; Signal-anchor for type II membrane protein membrane pass occupies residues Lys9 to Val32. A cytosolic Ser/Thr-rich junction region spans residues Tyr33 to Ser65. Over Tyr33 to Ser965 the chain is Extracellular. A disordered region spans residues Asn40–Ser65. A compositionally biased stretch (low complexity) spans Gly44–Thr61. A metalloprotease region spans residues Lys66–Ser965. Residue Asn125 is glycosylated (N-linked (GlcNAc...) asparagine). Tyr173 carries the sulfotyrosine modification. Asn231, Asn260, and Asn316 each carry an N-linked (GlcNAc...) asparagine glycan. Residue Gly349–Asn353 coordinates substrate. His385 is a Zn(2+) binding site. Glu386 serves as the catalytic Proton acceptor. Zn(2+) contacts are provided by His389 and Glu408. Position 416 is a sulfotyrosine (Tyr416). N-linked (GlcNAc...) asparagine glycosylation is found at Asn508, Asn569, Asn624, Asn680, Asn734, and Asn738. 2 cysteine pairs are disulfide-bonded: Cys760–Cys767 and Cys797–Cys833.

This sequence belongs to the peptidase M1 family. As to quaternary structure, homodimer. Interacts with SLC6A19. Zn(2+) serves as cofactor. Post-translationally, sulfated. In terms of processing, N- and O-glycosylated. May undergo proteolysis and give rise to a soluble form.

Its subcellular location is the cell membrane. It carries out the reaction Release of an N-terminal amino acid, Xaa-|-Yaa- from a peptide, amide or arylamide. Xaa is preferably Ala, but may be most amino acids including Pro (slow action). When a terminal hydrophobic residue is followed by a prolyl residue, the two may be released as an intact Xaa-Pro dipeptide.. Functionally, broad specificity aminopeptidase which plays a role in the final digestion of peptides generated from hydrolysis of proteins by gastric and pancreatic proteases. Also involved in the processing of various peptides including peptide hormones, such as angiotensin III and IV, neuropeptides, and chemokines. May also be involved the cleavage of peptides bound to major histocompatibility complex class II molecules of antigen presenting cells. May have a role in angiogenesis and promote cholesterol crystallization. May have a role in amino acid transport by acting as binding partner of amino acid transporter SLC6A19 and regulating its activity. The polypeptide is Aminopeptidase N (ANPEP) (Bos taurus (Bovine)).